The sequence spans 825 residues: Probable phosphoketolase (825 aa).

Belongs to the XFP family. Requires thiamine diphosphate as cofactor.

This Bifidobacterium animalis subsp. lactis (strain AD011) protein is Probable phosphoketolase.